A 278-amino-acid chain; its full sequence is 4-hydroxy-3-methylbut-2-enyl diphosphate reductase (278 aa).

Residue Cys-12 participates in [4Fe-4S] cluster binding. (2E)-4-hydroxy-3-methylbut-2-enyl diphosphate-binding residues include His-40 and His-75. Positions 40 and 75 each coordinate dimethylallyl diphosphate. Positions 40 and 75 each coordinate isopentenyl diphosphate. Position 97 (Cys-97) interacts with [4Fe-4S] cluster. His-125 is a (2E)-4-hydroxy-3-methylbut-2-enyl diphosphate binding site. His-125 serves as a coordination point for dimethylallyl diphosphate. Position 125 (His-125) interacts with isopentenyl diphosphate. Catalysis depends on Glu-127, which acts as the Proton donor. Position 157 (Thr-157) interacts with (2E)-4-hydroxy-3-methylbut-2-enyl diphosphate. Cys-187 is a binding site for [4Fe-4S] cluster. The (2E)-4-hydroxy-3-methylbut-2-enyl diphosphate site is built by Ser-215, Ser-216, Asn-217, and Ser-258. Residues Ser-215, Ser-216, Asn-217, and Ser-258 each coordinate dimethylallyl diphosphate. Residues Ser-215, Ser-216, Asn-217, and Ser-258 each contribute to the isopentenyl diphosphate site.

Belongs to the IspH family. Requires [4Fe-4S] cluster as cofactor.

It catalyses the reaction isopentenyl diphosphate + 2 oxidized [2Fe-2S]-[ferredoxin] + H2O = (2E)-4-hydroxy-3-methylbut-2-enyl diphosphate + 2 reduced [2Fe-2S]-[ferredoxin] + 2 H(+). It carries out the reaction dimethylallyl diphosphate + 2 oxidized [2Fe-2S]-[ferredoxin] + H2O = (2E)-4-hydroxy-3-methylbut-2-enyl diphosphate + 2 reduced [2Fe-2S]-[ferredoxin] + 2 H(+). It functions in the pathway isoprenoid biosynthesis; dimethylallyl diphosphate biosynthesis; dimethylallyl diphosphate from (2E)-4-hydroxy-3-methylbutenyl diphosphate: step 1/1. Its pathway is isoprenoid biosynthesis; isopentenyl diphosphate biosynthesis via DXP pathway; isopentenyl diphosphate from 1-deoxy-D-xylulose 5-phosphate: step 6/6. Its function is as follows. Catalyzes the conversion of 1-hydroxy-2-methyl-2-(E)-butenyl 4-diphosphate (HMBPP) into a mixture of isopentenyl diphosphate (IPP) and dimethylallyl diphosphate (DMAPP). Acts in the terminal step of the DOXP/MEP pathway for isoprenoid precursor biosynthesis. This is 4-hydroxy-3-methylbut-2-enyl diphosphate reductase from Pseudothermotoga lettingae (strain ATCC BAA-301 / DSM 14385 / NBRC 107922 / TMO) (Thermotoga lettingae).